The chain runs to 280 residues: Phosphatidylserine decarboxylase proenzyme (280 aa).

Active-site charge relay system; for autoendoproteolytic cleavage activity residues include Asp-86, His-143, and Ser-246. The Schiff-base intermediate with substrate; via pyruvic acid; for decarboxylase activity role is filled by Ser-246. The residue at position 246 (Ser-246) is a Pyruvic acid (Ser); by autocatalysis.

Belongs to the phosphatidylserine decarboxylase family. PSD-B subfamily. Prokaryotic type I sub-subfamily. As to quaternary structure, heterodimer of a large membrane-associated beta subunit and a small pyruvoyl-containing alpha subunit. Requires pyruvate as cofactor. Post-translationally, is synthesized initially as an inactive proenzyme. Formation of the active enzyme involves a self-maturation process in which the active site pyruvoyl group is generated from an internal serine residue via an autocatalytic post-translational modification. Two non-identical subunits are generated from the proenzyme in this reaction, and the pyruvate is formed at the N-terminus of the alpha chain, which is derived from the carboxyl end of the proenzyme. The autoendoproteolytic cleavage occurs by a canonical serine protease mechanism, in which the side chain hydroxyl group of the serine supplies its oxygen atom to form the C-terminus of the beta chain, while the remainder of the serine residue undergoes an oxidative deamination to produce ammonia and the pyruvoyl prosthetic group on the alpha chain. During this reaction, the Ser that is part of the protease active site of the proenzyme becomes the pyruvoyl prosthetic group, which constitutes an essential element of the active site of the mature decarboxylase.

It localises to the cell membrane. It carries out the reaction a 1,2-diacyl-sn-glycero-3-phospho-L-serine + H(+) = a 1,2-diacyl-sn-glycero-3-phosphoethanolamine + CO2. The protein operates within phospholipid metabolism; phosphatidylethanolamine biosynthesis; phosphatidylethanolamine from CDP-diacylglycerol: step 2/2. In terms of biological role, catalyzes the formation of phosphatidylethanolamine (PtdEtn) from phosphatidylserine (PtdSer). The sequence is that of Phosphatidylserine decarboxylase proenzyme from Brevibacillus brevis (strain 47 / JCM 6285 / NBRC 100599).